The primary structure comprises 475 residues: ATP synthase subunit beta (475 aa).

Residue 152–159 (GGAGVGKT) participates in ATP binding.

The protein belongs to the ATPase alpha/beta chains family. As to quaternary structure, F-type ATPases have 2 components, CF(1) - the catalytic core - and CF(0) - the membrane proton channel. CF(1) has five subunits: alpha(3), beta(3), gamma(1), delta(1), epsilon(1). CF(0) has three main subunits: a(1), b(2) and c(9-12). The alpha and beta chains form an alternating ring which encloses part of the gamma chain. CF(1) is attached to CF(0) by a central stalk formed by the gamma and epsilon chains, while a peripheral stalk is formed by the delta and b chains.

The protein resides in the cell inner membrane. It catalyses the reaction ATP + H2O + 4 H(+)(in) = ADP + phosphate + 5 H(+)(out). Produces ATP from ADP in the presence of a proton gradient across the membrane. The catalytic sites are hosted primarily by the beta subunits. The chain is ATP synthase subunit beta from Wolbachia sp. subsp. Drosophila simulans (strain wRi).